We begin with the raw amino-acid sequence, 73 residues long: Disintegrin molossin (73 aa).

Residues 1–73 (EAGIECDCGS…ADCPRNRFHA (73 aa)) form the Disintegrin domain. Cystine bridges form between Cys6–Cys21, Cys8–Cys16, Cys15–Cys38, Cys29–Cys35, Cys34–Cys59, and Cys47–Cys66. The Cell attachment site motif lies at 51–53 (RGD).

This sequence belongs to the venom metalloproteinase (M12B) family. P-II subfamily. P-IIa sub-subfamily. As to quaternary structure, monomer (disintegrin). As to expression, expressed by the venom gland.

The protein localises to the secreted. In terms of biological role, inhibits fibrinogen interaction with platelets. Acts by binding to alpha-IIb/beta-3 (ITGA2B/ITGB3) on the platelet surface and inhibits aggregation induced by ADP, thrombin, platelet-activating factor and collagen. In Crotalus molossus molossus (Northern black-tailed rattlesnake), this protein is Disintegrin molossin.